We begin with the raw amino-acid sequence, 144 residues long: Putative RNase YutE (144 aa).

R96 is an active-site residue. The RX(4)HXY motif motif lies at 96-103 (RKTLVQQY).

This sequence belongs to the HepT RNase toxin family. As to quaternary structure, homodimer, probably forms a complex with cognate antitoxin YutD.

Its function is as follows. Probable toxic component of a putative type VII toxin-antitoxin (TA) system, probably an RNase. Probably neutralized by cognate antitoxin YutD. This Bacillus subtilis (strain 168) protein is Putative RNase YutE (yutE).